The following is a 246-amino-acid chain: 1-(5-phosphoribosyl)-5-[(5-phosphoribosylamino)methylideneamino] imidazole-4-carboxamide isomerase (246 aa).

The Proton acceptor role is filled by Asp8. Asp131 functions as the Proton donor in the catalytic mechanism.

This sequence belongs to the HisA/HisF family.

The protein resides in the cytoplasm. The catalysed reaction is 1-(5-phospho-beta-D-ribosyl)-5-[(5-phospho-beta-D-ribosylamino)methylideneamino]imidazole-4-carboxamide = 5-[(5-phospho-1-deoxy-D-ribulos-1-ylimino)methylamino]-1-(5-phospho-beta-D-ribosyl)imidazole-4-carboxamide. It functions in the pathway amino-acid biosynthesis; L-histidine biosynthesis; L-histidine from 5-phospho-alpha-D-ribose 1-diphosphate: step 4/9. This chain is 1-(5-phosphoribosyl)-5-[(5-phosphoribosylamino)methylideneamino] imidazole-4-carboxamide isomerase, found in Bordetella avium (strain 197N).